The following is a 279-amino-acid chain: Calcium-binding protein 4 (279 aa).

A compositionally biased stretch (basic and acidic residues) spans 1–12 (MAEEQGRGRHGP). A disordered region spans residues 1–114 (MAEEQGRGRH…PGPQHDAAQR (114 aa)). Position 42 is a phosphoserine (S42). Positions 55–65 (GPSSSGEQTPM) are enriched in polar residues. 4 consecutive EF-hand domains span residues 133–168 (EELD…LGYM), 187–204 (GRVD…KLRE), 210–245 (LGLR…LLGE), and 247–279 (LVGP…LSRH). Residues D146, D148, D150, Y152, and D157 each contribute to the Ca(2+) site. Residues D223, D225, D227, R229, E234, D260, N262, D264, T266, and E271 each contribute to the Ca(2+) site.

As to quaternary structure, interacts with CACNA1F and CACNA1D (via IQ domain) in a calcium independent manner. Interacts (via N-terminus) with UNC119. Phosphorylated. Phosphorylation levels change with the light conditions and regulate the activity. In terms of tissue distribution, expressed in the retina.

Its subcellular location is the cytoplasm. It localises to the presynapse. Its function is as follows. May play a role in normal synaptic function, probably through regulation of Ca(2+) influx and neurotransmitter release in photoreceptor synaptic terminals and in auditory transmission. Modulator of CACNA1F, shifting the activation range to more hyperpolarized voltages. The chain is Calcium-binding protein 4 (CABP4) from Bos taurus (Bovine).